A 399-amino-acid polypeptide reads, in one-letter code: Organelle RRM domain-containing protein 1, chloroplastic (399 aa).

A chloroplast-targeting transit peptide spans 1–52 (MDAARASLLLAGGLAVSTSTSAVATAAQTVSIPHLSPHTRRRRQRRFLRLAS). An RRM domain is found at 295 to 373 (KRLFVTGLSF…WMIVVDVAKH (79 aa)). Positions 377–399 (DRQPPYSASGRSNQVLRSRYHTG) are disordered.

The protein resides in the plastid. It localises to the chloroplast. Its function is as follows. Involved in C-to-U editing of chloroplastic RNA. Functions as major chloroplastic editing factor. Controls a majority of the chloroplastic editing sites. The polypeptide is Organelle RRM domain-containing protein 1, chloroplastic (Oryza sativa subsp. japonica (Rice)).